Consider the following 317-residue polypeptide: Olfactory receptor 2T27 (317 aa).

Topologically, residues Met1–Arg22 are extracellular. Asn5 carries an N-linked (GlcNAc...) asparagine glycan. The helical transmembrane segment at Phe23–Val43 threads the bilayer. Residues Val44–Tyr60 are Cytoplasmic-facing. Residues Phe61–Val83 form a helical membrane-spanning segment. Residues Asp84–Cys97 lie on the Extracellular side of the membrane. Cysteines 97 and 189 form a disulfide. Residues Thr98 to Met118 form a helical membrane-spanning segment. Residues Ser119–Lys139 lie on the Cytoplasmic side of the membrane. A helical transmembrane segment spans residues Ile140 to Thr160. Over Pro161 to Thr197 the chain is Extracellular. Residues Ala198–Tyr218 traverse the membrane as a helical segment. Residues Thr219–His244 are Cytoplasmic-facing. The chain crosses the membrane as a helical span at residues Met245 to Tyr265. The Extracellular segment spans residues His266 to Asp271. Residues Lys272–Leu292 traverse the membrane as a helical segment. The Cytoplasmic portion of the chain corresponds to Arg293–Phe317.

This sequence belongs to the G-protein coupled receptor 1 family.

It is found in the cell membrane. Functionally, odorant receptor. This chain is Olfactory receptor 2T27 (OR2T27), found in Homo sapiens (Human).